A 284-amino-acid polypeptide reads, in one-letter code: NAD(P)H-hydrate epimerase (284 aa).

Residues 1 to 55 constitute a mitochondrion transit peptide; it reads MSGLRTLLGLGLLVSSSRFPRVVARGGPRCPGPAWWAARPMHLGDSTMAGGTVKY. The region spanning 61–271 is the YjeF N-terminal domain; the sequence is AQAVDEELFN…DLEKKYQLNL (211 aa). 115-119 lines the (6S)-NADPHX pocket; that stretch reads NNGGD. Asparagine 116 provides a ligand contact to K(+). An N6-succinyllysine modification is found at lysine 140. Aspartate 181 lines the K(+) pocket. (6S)-NADPHX is bound by residues 185-191 and aspartate 214; that span reads GFSFKGA. Residue serine 217 coordinates K(+).

The protein belongs to the NnrE/AIBP family. Homodimer. Interacts with APOA1 and APOA2. K(+) is required as a cofactor. Undergoes physiological phosphorylation during sperm capacitation, downstream to PKA activation.

The protein resides in the mitochondrion. Its subcellular location is the secreted. It carries out the reaction (6R)-NADHX = (6S)-NADHX. The catalysed reaction is (6R)-NADPHX = (6S)-NADPHX. In terms of biological role, catalyzes the epimerization of the S- and R-forms of NAD(P)HX, a damaged form of NAD(P)H that is a result of enzymatic or heat-dependent hydration. This is a prerequisite for the S-specific NAD(P)H-hydrate dehydratase to allow the repair of both epimers of NAD(P)HX. Accelerates cholesterol efflux from endothelial cells to high-density lipoprotein (HDL) and thereby regulates angiogenesis. The chain is NAD(P)H-hydrate epimerase from Monodelphis domestica (Gray short-tailed opossum).